Reading from the N-terminus, the 164-residue chain is Pheromone-binding protein 2 (164 aa).

The first 22 residues, Met-1–Ala-22, serve as a signal peptide directing secretion. Intrachain disulfides connect Cys-41/Cys-76, Cys-72/Cys-130, and Cys-119/Cys-139.

Belongs to the PBP/GOBP family. As to expression, antenna.

In terms of biological role, this major soluble protein in olfactory sensilla of male moths might serve to solubilize the extremely hydrophobic pheromone molecules and to transport pheromone through the aqueous lymph to receptors located on olfactory cilia. This chain is Pheromone-binding protein 2, found in Antheraea pernyi (Chinese oak silk moth).